Consider the following 112-residue polypeptide: Large ribosomal subunit protein bL21 (112 aa).

It belongs to the bacterial ribosomal protein bL21 family. Part of the 50S ribosomal subunit. Contacts protein L20.

In terms of biological role, this protein binds to 23S rRNA in the presence of protein L20. This Buchnera aphidicola subsp. Baizongia pistaciae (strain Bp) protein is Large ribosomal subunit protein bL21.